The chain runs to 432 residues: Phosphomethylpyrimidine synthase (432 aa).

Substrate contacts are provided by residues N66, M95, Y124, H163, S185–G187, D226–R229, and E265. Residue H269 participates in Zn(2+) binding. Y292 provides a ligand contact to substrate. Residue H333 participates in Zn(2+) binding. Residues C409, C412, and C416 each coordinate [4Fe-4S] cluster.

This sequence belongs to the ThiC family. Requires [4Fe-4S] cluster as cofactor.

It catalyses the reaction 5-amino-1-(5-phospho-beta-D-ribosyl)imidazole + S-adenosyl-L-methionine = 4-amino-2-methyl-5-(phosphooxymethyl)pyrimidine + CO + 5'-deoxyadenosine + formate + L-methionine + 3 H(+). It participates in cofactor biosynthesis; thiamine diphosphate biosynthesis. In terms of biological role, catalyzes the synthesis of the hydroxymethylpyrimidine phosphate (HMP-P) moiety of thiamine from aminoimidazole ribotide (AIR) in a radical S-adenosyl-L-methionine (SAM)-dependent reaction. In Moorella thermoacetica (strain ATCC 39073 / JCM 9320), this protein is Phosphomethylpyrimidine synthase.